Consider the following 63-residue polypeptide: Large ribosomal subunit protein bL35 (63 aa).

Residues 1–15 (MPKIKTHRGAAKRFK) show a composition bias toward basic residues. The interval 1–26 (MPKIKTHRGAAKRFKQTAGGKWKGSH) is disordered.

Belongs to the bacterial ribosomal protein bL35 family.

This chain is Large ribosomal subunit protein bL35, found in Pelotomaculum thermopropionicum (strain DSM 13744 / JCM 10971 / SI).